A 244-amino-acid chain; its full sequence is 6-carboxyhexanoate--CoA ligase (244 aa).

This sequence belongs to the BioW family. In terms of assembly, homodimer. Mg(2+) is required as a cofactor.

The catalysed reaction is heptanedioate + ATP + CoA = 6-carboxyhexanoyl-CoA + AMP + diphosphate. Its pathway is metabolic intermediate metabolism; pimeloyl-CoA biosynthesis; pimeloyl-CoA from pimelate: step 1/1. Its function is as follows. Catalyzes the transformation of pimelate into pimeloyl-CoA with concomitant hydrolysis of ATP to AMP. This chain is 6-carboxyhexanoate--CoA ligase, found in Hydrogenobacter thermophilus (strain DSM 6534 / IAM 12695 / TK-6).